Consider the following 1239-residue polypeptide: Inner tegument protein (1239 aa).

Low complexity predominate over residues 1–10 (MASAMESDSS). Disordered stretches follow at residues 1 to 20 (MASAMESDSSGGSGGADAQP), 672 to 708 (GESPQAVGLRPLNLEGEGKAGDAGAEGAEDEEGGGPW), and 1090 to 1239 (GRNA…AEDE). The segment at 618–1239 (NELPKTRSLA…RPPRPTAEDE (622 aa)) is interaction with large tegument protein. A compositionally biased stretch (low complexity) spans 1115–1126 (DSSPFSFSSSDF). Residues 1127–1136 (SDQDEGEGGE) are compositionally biased toward acidic residues. The span at 1181–1190 (RTTPSPSRRA) shows a compositional bias: low complexity. Positions 1219-1232 (VRPRTRRGATRRPP) are enriched in basic residues.

It belongs to the herpesviridae inner tegument protein family. Interacts (via C-terminus) with the large tegument protein/LTP (via N-terminus).

The protein resides in the virion tegument. It localises to the host cytoplasm. The protein localises to the host nucleus. Its subcellular location is the host Golgi apparatus. It is found in the host trans-Golgi network. In terms of biological role, plays an essential role in cytoplasmic secondary envelopment during viral egress. Interacts with the capsid via the large tegument protein/LTP and participates in its transport to the host trans-Golgi network (TGN) where secondary envelopment occurs. Modulates tegumentation and capsid accumulation at the viral assembly complex. This chain is Inner tegument protein, found in Homo sapiens (Human).